The chain runs to 143 residues: Large ribosomal subunit protein uL15 (143 aa).

The segment at 1 to 58 is disordered; sequence MQLNDLRSAPGARREKHRPGRGIGSGLGKTGGRGHKGQTSRSGGSIAPGFEGGQQPLH. The segment covering 21-31 has biased composition (gly residues); the sequence is RGIGSGLGKTG.

It belongs to the universal ribosomal protein uL15 family. Part of the 50S ribosomal subunit.

Binds to the 23S rRNA. This Ectopseudomonas mendocina (strain ymp) (Pseudomonas mendocina) protein is Large ribosomal subunit protein uL15.